The following is a 430-amino-acid chain: Adenylosuccinate synthetase (430 aa).

GTP is bound by residues 12–18 (GDEGKGK) and 40–42 (GHT). D13 serves as the catalytic Proton acceptor. The Mg(2+) site is built by D13 and G40. Residues 13–16 (DEGK), 38–41 (NAGH), T130, R144, Q224, T239, and R303 each bind IMP. H41 (proton donor) is an active-site residue. 299–305 (TVTGRKR) contacts substrate. Residues R305, 331-333 (KLD), and 413-415 (STS) contribute to the GTP site.

The protein belongs to the adenylosuccinate synthetase family. As to quaternary structure, homodimer. The cofactor is Mg(2+).

Its subcellular location is the cytoplasm. It catalyses the reaction IMP + L-aspartate + GTP = N(6)-(1,2-dicarboxyethyl)-AMP + GDP + phosphate + 2 H(+). Its pathway is purine metabolism; AMP biosynthesis via de novo pathway; AMP from IMP: step 1/2. Functionally, plays an important role in the de novo pathway of purine nucleotide biosynthesis. Catalyzes the first committed step in the biosynthesis of AMP from IMP. In Cereibacter sphaeroides (strain ATCC 17025 / ATH 2.4.3) (Rhodobacter sphaeroides), this protein is Adenylosuccinate synthetase.